Here is a 394-residue protein sequence, read N- to C-terminus: Phosphopentomutase (394 aa).

Mn(2+) contacts are provided by Asp-13, Asp-286, His-291, Asp-327, His-328, and His-339.

Belongs to the phosphopentomutase family. The cofactor is Mn(2+).

The protein localises to the cytoplasm. It carries out the reaction 2-deoxy-alpha-D-ribose 1-phosphate = 2-deoxy-D-ribose 5-phosphate. It catalyses the reaction alpha-D-ribose 1-phosphate = D-ribose 5-phosphate. It functions in the pathway carbohydrate degradation; 2-deoxy-D-ribose 1-phosphate degradation; D-glyceraldehyde 3-phosphate and acetaldehyde from 2-deoxy-alpha-D-ribose 1-phosphate: step 1/2. Functionally, isomerase that catalyzes the conversion of deoxy-ribose 1-phosphate (dRib-1-P) and ribose 1-phosphate (Rib-1-P) to deoxy-ribose 5-phosphate (dRib-5-P) and ribose 5-phosphate (Rib-5-P), respectively. The protein is Phosphopentomutase of Bacillus cereus (strain AH187).